The primary structure comprises 228 residues: Urease accessory protein UreF (228 aa).

The protein belongs to the UreF family. As to quaternary structure, ureD, UreF and UreG form a complex that acts as a GTP-hydrolysis-dependent molecular chaperone, activating the urease apoprotein by helping to assemble the nickel containing metallocenter of UreC. The UreE protein probably delivers the nickel.

It localises to the cytoplasm. In terms of biological role, required for maturation of urease via the functional incorporation of the urease nickel metallocenter. The protein is Urease accessory protein UreF of Brucella ovis (strain ATCC 25840 / 63/290 / NCTC 10512).